Here is a 788-residue protein sequence, read N- to C-terminus: MSQPGPKPAASPRPSRGAAARHTQEHVNEKNIGSSSKPGEKKGSDEKKAASLGSSQPSRPHVGEAATATKVTASSAATSKSPSMSTTETKAIPVNKQLEGPDQKRPREQAVKTESKKPQSSEQPVVHEKKSKGGPKEGSEPKNLPKHTSSTGSKHAHKEKALSRSNEQMVSEKPSESKTKFQDVPSAGGESVAGGGTVATALDKVVGKKKEQKPFTPASPVQSTPSKPSDKSGMDAALDDLIDTLGGHEDTNRDDPPYTGPVVLDPMYSTYLEALGIKEGTIPPEYRKLLEKNEGITQPLPDSPKPMGTDQAIDALSSDFTCSSPTGKQSEKEKSTGEIFKAQSAGVTRSSVPPKEKKRKVEEEVINDQALQALSDSLGTRQPDPPSHVSQAEQVKEAKAKEERQEKCGEDEDTVPAEYRLKPAKDKDGKPLLPEPEETSKSLSESELIGELSADFDRSTYQDKPSTPAEKKSNDTSQTPPGETVPRASMCSIRSAPPKLASLKGVVPEDAVETLAGSLGTREADPEHEKTVEDKVKEKAKEEEHEKLGEKEETVPPDYRLEEVKDKDGKPLLPKESQEQLAPLSDDFLLDALSQDFSSPANISSLEFEDAKLSAAISEVVSQTPAPSTHAAAPLPGTEQKDKELDDALDELSDSLGQRPPDPDENKPLDDKVKEKIKPEHSEKLGERDDTIPPEYRHLLDNDGKDKPEKPPTKKTEKPDQDRDPIDALSEDLDSCPSTTETSKNTAKGKSKKTSSSKASKDGEKTKDSSKKTEEVSKPKAKEDARHS.

The span at 1–11 (MSQPGPKPAAS) shows a compositional bias: pro residues. 3 disordered regions span residues 1–262 (MSQP…TGPV), 289–493 (LLEK…MCSI), and 514–580 (TLAG…SQEQ). Ser11 carries the post-translational modification Phosphoserine. Low complexity predominate over residues 12–21 (PRPSRGAAAR). A compositionally biased stretch (basic and acidic residues) spans 38-49 (PGEKKGSDEKKA). A compositionally biased stretch (low complexity) spans 65–87 (AATATKVTASSAATSKSPSMSTT). Residues 99-119 (EGPDQKRPREQAVKTESKKPQ) are compositionally biased toward basic and acidic residues. Residue Lys112 forms a Glycyl lysine isopeptide (Lys-Gly) (interchain with G-Cter in SUMO2) linkage. Position 129 is an N6-acetyllysine (Lys129). Ser165 bears the Phosphoserine mark. Thr216 carries the post-translational modification Phosphothreonine. Residue Ser219 is modified to Phosphoserine. A compositionally biased stretch (basic and acidic residues) spans 246–256 (GGHEDTNRDDP). The Inhibitory domain 1 repeat unit spans residues 251–303 (TNRDDPPYTGPVVLDPMYSTYLEALGIKEGTIPPEYRKLLEKNEGITQPLPDS). 2 positions are modified to phosphoserine: Ser303 and Ser324. Polar residues-rich tracts occupy residues 318-328 (SDFTCSSPTGK) and 369-380 (QALQALSDSLGT). Residues 384-436 (DPPSHVSQAEQVKEAKAKEERQEKCGEDEDTVPAEYRLKPAKDKDGKPLLPEP) form an Inhibitory domain 2 repeat. 2 stretches are compositionally biased toward basic and acidic residues: residues 394–408 (QVKE…QEKC) and 419–430 (YRLKPAKDKDGK). Low complexity predominate over residues 441-453 (KSLSESELIGELS). Ser444, Ser446, and Ser453 each carry phosphoserine. At Thr479 the chain carries Phosphothreonine. The residue at position 518 (Ser518) is a Phosphoserine. Basic and acidic residues predominate over residues 522 to 570 (READPEHEKTVEDKVKEKAKEEEHEKLGEKEETVPPDYRLEEVKDKDGK). One copy of the Inhibitory domain 3 repeat lies at 524-577 (ADPEHEKTVEDKVKEKAKEEEHEKLGEKEETVPPDYRLEEVKDKDGKPLLPKES). Residues Ser594, Ser605, Ser653, and Ser655 each carry the phosphoserine modification. The disordered stretch occupies residues 620-788 (VVSQTPAPST…PKAKEDARHS (169 aa)). The stretch at 661-714 (PDPDENKPLDDKVKEKIKPEHSEKLGERDDTIPPEYRHLLDNDGKDKPEKPPTK) is one Inhibitory domain 4 repeat. Composition is skewed to basic and acidic residues over residues 661 to 726 (PDPD…RDPI) and 759 to 788 (ASKD…ARHS).

This sequence belongs to the protease inhibitor I27 (calpastatin) family. As to expression, isoform 2 is the major form in all tissues examined. Isoform 1 accounts for 5-10% in tissues such as skeletal muscle, liver and brain, and 30% in myoblasts. Isoforms 4 and 5 are testis-specific. Isoform 6 is highly expressed in heart and skeletal muscle with lower levels in liver, brain and testis. Isoform 7 is expressed at high levels in liver.

Specific inhibition of calpain (calcium-dependent cysteine protease). Plays a key role in postmortem tenderization of meat and have been proposed to be involved in muscle protein degradation in living tissue. This chain is Calpastatin (Cast), found in Mus musculus (Mouse).